A 453-amino-acid polypeptide reads, in one-letter code: Mogroside IIIx synthase (453 aa).

The active-site Proton acceptor is His21. Asp122 serves as the catalytic Charge relay. UDP-alpha-D-glucose-binding residues include Ser273, Gln336, Trp354, Asn355, Ser356, Glu359, Asp375, and Gln376.

The protein belongs to the UDP-glycosyltransferase family. Highly expressed in mature fruits.

It carries out the reaction mogroside IIE + UDP-alpha-D-glucose = mogroside IIIX + UDP + H(+). The catalysed reaction is mogroside III + UDP-alpha-D-glucose = mogroside IV + UDP + H(+). It catalyses the reaction mogroside III + UDP-alpha-D-glucose = siamenoside I + UDP + H(+). The enzyme catalyses mogroside IV + UDP-alpha-D-glucose = mogroside V + UDP + H(+). The protein operates within secondary metabolite biosynthesis; terpenoid biosynthesis. Its function is as follows. UDP-glycosyltransferase involved in the biosynthesis of cucurbitacin and mogroside tetracyclic triterpene natural products (e.g. siamenoside I and mogrosides IV, V and VI). Cucurbitacins have cytotoxic properties and exhibit deterrent taste as a defense barrier against herbivores. Mogrosides are nonsugar highly oxygenated compounds used as high-intensity zero-calorie sweeteners; they also possess pharmacological properties such as regulating immunity, lowering blood sugar and lipid levels, protecting the liver, and acting as antioxidants and antitumor agents. Catalyzes the branched glucosylations of mogroside II-E, mogroside III and mogroside IV. This Siraitia grosvenorii (Monk's fruit) protein is Mogroside IIIx synthase.